Reading from the N-terminus, the 242-residue chain is UPF0246 protein SPD_1378 (242 aa).

This sequence belongs to the UPF0246 family.

The chain is UPF0246 protein SPD_1378 from Streptococcus pneumoniae serotype 2 (strain D39 / NCTC 7466).